Consider the following 277-residue polypeptide: tRNA pseudouridine synthase B (277 aa).

The Nucleophile role is filled by D38.

Belongs to the pseudouridine synthase TruB family. Type 1 subfamily.

It catalyses the reaction uridine(55) in tRNA = pseudouridine(55) in tRNA. Functionally, responsible for synthesis of pseudouridine from uracil-55 in the psi GC loop of transfer RNAs. The polypeptide is tRNA pseudouridine synthase B (Sulfurovum sp. (strain NBC37-1)).